The primary structure comprises 207 residues: N-(5'-phosphoribosyl)anthranilate isomerase (207 aa).

This sequence belongs to the TrpF family.

It carries out the reaction N-(5-phospho-beta-D-ribosyl)anthranilate = 1-(2-carboxyphenylamino)-1-deoxy-D-ribulose 5-phosphate. Its pathway is amino-acid biosynthesis; L-tryptophan biosynthesis; L-tryptophan from chorismate: step 3/5. The sequence is that of N-(5'-phosphoribosyl)anthranilate isomerase from Geotalea daltonii (strain DSM 22248 / JCM 15807 / FRC-32) (Geobacter daltonii).